The following is a 207-amino-acid chain: Large ribosomal subunit protein uL4 (207 aa).

The interval 48-75 is disordered; the sequence is THAVKNRSAVSGGGRKPWKQKGTGRARA.

Belongs to the universal ribosomal protein uL4 family. As to quaternary structure, part of the 50S ribosomal subunit.

Its function is as follows. One of the primary rRNA binding proteins, this protein initially binds near the 5'-end of the 23S rRNA. It is important during the early stages of 50S assembly. It makes multiple contacts with different domains of the 23S rRNA in the assembled 50S subunit and ribosome. Forms part of the polypeptide exit tunnel. The chain is Large ribosomal subunit protein uL4 from Leuconostoc citreum (strain KM20).